Here is a 138-residue protein sequence, read N- to C-terminus: Large ribosomal subunit protein uL16 (138 aa).

Positions 1 to 13 (MLQPARRKYRKEQ) are enriched in basic residues. Residues 1-22 (MLQPARRKYRKEQKGRNTGVAT) form a disordered region.

It belongs to the universal ribosomal protein uL16 family. As to quaternary structure, part of the 50S ribosomal subunit.

Binds 23S rRNA and is also seen to make contacts with the A and possibly P site tRNAs. In Polaromonas sp. (strain JS666 / ATCC BAA-500), this protein is Large ribosomal subunit protein uL16.